The chain runs to 626 residues: Glutamate--cysteine ligase (626 aa).

It belongs to the glutamate--cysteine ligase type 3 family. In terms of assembly, monomer.

The catalysed reaction is L-cysteine + L-glutamate + ATP = gamma-L-glutamyl-L-cysteine + ADP + phosphate + H(+). Its pathway is sulfur metabolism; glutathione biosynthesis; glutathione from L-cysteine and L-glutamate: step 1/2. Functionally, an essential enzyme in glutathione (L-gamma-glutamyl-L-cysteinylglycine, GSH) biosynthesis, GSH is essential for growth and differentiation to prespore stage. Catalyzes the condensation of glutamate to cysteine. In Dictyostelium discoideum (Social amoeba), this protein is Glutamate--cysteine ligase (gcsA).